The following is a 469-amino-acid chain: 6-phosphogluconate dehydrogenase, NADP(+)-dependent, decarboxylating (469 aa).

NADP(+) is bound by residues 10 to 15 (GLAVMG), 33 to 35 (NRS), 74 to 76 (VKA), and asparagine 102. Substrate is bound by residues asparagine 102 and 128–130 (SGG). The active-site Proton acceptor is lysine 182. 185 to 186 (HN) lines the substrate pocket. Residue glutamate 189 is the Proton donor of the active site. Substrate-binding residues include tyrosine 190, lysine 260, arginine 287, arginine 446, and histidine 452.

The protein belongs to the 6-phosphogluconate dehydrogenase family. In terms of assembly, homodimer.

It catalyses the reaction 6-phospho-D-gluconate + NADP(+) = D-ribulose 5-phosphate + CO2 + NADPH. It functions in the pathway carbohydrate degradation; pentose phosphate pathway; D-ribulose 5-phosphate from D-glucose 6-phosphate (oxidative stage): step 3/3. In terms of biological role, catalyzes the oxidative decarboxylation of 6-phosphogluconate to ribulose 5-phosphate and CO(2), with concomitant reduction of NADP to NADPH. Is the predominant 6-P-gluconate dehydrogenase isoenzyme in B.subtilis during growth on glucose and gluconate. The sequence is that of 6-phosphogluconate dehydrogenase, NADP(+)-dependent, decarboxylating (gndA) from Bacillus subtilis (strain 168).